The sequence spans 130 residues: MIGNWNYGTGRRKSAVARVFIKAGKGDIIVNGKPIADYFARETSLMIVRQPLELTNHAQTFDIKVNVSGGGETGQAGAVRHGITRALIDYDATLKPALSNAGFVTRDAREVERKKVGLHKARRAKQFSKR.

The protein belongs to the universal ribosomal protein uS9 family.

The sequence is that of Small ribosomal subunit protein uS9 from Burkholderia multivorans (strain ATCC 17616 / 249).